Here is a 281-residue protein sequence, read N- to C-terminus: Probable endonuclease 4 (281 aa).

The Zn(2+) site is built by His-69, His-109, Glu-145, Asp-179, His-182, His-216, Asp-229, His-231, and Glu-261.

It belongs to the AP endonuclease 2 family. Zn(2+) is required as a cofactor.

It carries out the reaction Endonucleolytic cleavage to 5'-phosphooligonucleotide end-products.. Functionally, endonuclease IV plays a role in DNA repair. It cleaves phosphodiester bonds at apurinic or apyrimidinic (AP) sites, generating a 3'-hydroxyl group and a 5'-terminal sugar phosphate. This Glaesserella parasuis serovar 5 (strain SH0165) (Haemophilus parasuis) protein is Probable endonuclease 4.